The primary structure comprises 158 residues: Deoxyuridine 5'-triphosphate nucleotidohydrolase (158 aa).

Residues 75-77 (RSG), asparagine 88, 92-94 (TVD), and lysine 102 each bind substrate.

This sequence belongs to the dUTPase family. The cofactor is Mg(2+).

The enzyme catalyses dUTP + H2O = dUMP + diphosphate + H(+). Its pathway is pyrimidine metabolism; dUMP biosynthesis; dUMP from dCTP (dUTP route): step 2/2. Its function is as follows. This enzyme is involved in nucleotide metabolism: it produces dUMP, the immediate precursor of thymidine nucleotides and it decreases the intracellular concentration of dUTP so that uracil cannot be incorporated into DNA. This Bifidobacterium longum subsp. infantis (strain ATCC 15697 / DSM 20088 / JCM 1222 / NCTC 11817 / S12) protein is Deoxyuridine 5'-triphosphate nucleotidohydrolase.